Reading from the N-terminus, the 841-residue chain is MELDDLDLSGSWPLDQITFASNFKSPVIFSSSEQPFSPLWSFSETSGDVGGELYSAAVAPTRFTDYSVLLASSESETTTKENNQVPSPSWGIMPLENPDSYCAIKAKMTQALRYFKESTGQQHVLAQVWAPVKNRGRYVLTTSGQPFVLGPNSNGLNQYRMVSLTYMFSLDGERDGELGLPGRVFRKKLPEWTPNVQYYSSKEFSRLGHALHYNVQGTLALPVFEPSRQLCVGVVELIMTSPKINYAPEVEKVCKALEAVNLKTSEILNHETTQICNEGRQNALAEILEILTVVCETYKLPLAQTWVPCRHRSVLAFGGGFKKSCSSFDGSCMGKVCMSTSDLAVYVVDAHVWGFRDACAEHHLQKGQGVAGRAFQSGNLCFCRDVTRFCKTDYPLVHYARMFKLTSCFAVCLKSTYTGDDEYVLEFFLPPAITDKSEQDCLLGSLLQTMKQHYSSLKVVSETELCENNMSLEVVEASEDGMVYSKLEPIRIHHPAQISKDYLELNAPEQKVSLNSDFMENNEVDDGVERFQTLDPIPEAKTVKKSERKRGKTEKTISLEVLQQYFAGSLKDAAKSLGVCPTTMKRICRQHGISRWPSRKINKVNRSLTRLKHVIDSVQGADGSLNLTSLSPRPWPHQIPPIDIQLAKNCPPTSTSPLSNLQDVKIENRDAEDSAGSSTSRASCKVNPICETRFRLPTHNQEPSRQVALDDSDSSSKNMTNFWAHLTCQDTASPTILQHKLVSIKATYREDIIRFKISPESVSITELKQQVAKRLKLETAAFELKYLDDDREWVSVSCDADLSECLDTSAAKANTLRLSVHDVTFNFGSSCESSEETMMCL.

The RWP-RK domain occupies 539–624 (EAKTVKKSER…IDSVQGADGS (86 aa)). The interval 649-682 (NCPPTSTSPLSNLQDVKIENRDAEDSAGSSTSRA) is disordered. A compositionally biased stretch (polar residues) spans 651–662 (PPTSTSPLSNLQ). The PB1 domain occupies 741–823 (LVSIKATYRE…NTLRLSVHDV (83 aa)).

It is found in the nucleus. Functionally, probable transcription factor. The protein is Protein NLP6 (NLP6) of Arabidopsis thaliana (Mouse-ear cress).